Consider the following 158-residue polypeptide: Frataxin homolog, mitochondrial (158 aa).

The protein belongs to the frataxin family. Monomer. Oligomer.

The protein resides in the mitochondrion. The enzyme catalyses 4 Fe(2+) + O2 + 4 H(+) = 4 Fe(3+) + 2 H2O. Functionally, promotes the biosynthesis of heme as well as the assembly and repair of iron-sulfur clusters by delivering Fe(2+) to proteins involved in these pathways. May play a role in the protection against iron-catalyzed oxidative stress through its ability to catalyze the oxidation of Fe(2+) to Fe(3+). May be able to store large amounts of the metal in the form of a ferrihydrite mineral by oligomerization. The polypeptide is Frataxin homolog, mitochondrial (Schizosaccharomyces pombe (strain 972 / ATCC 24843) (Fission yeast)).